We begin with the raw amino-acid sequence, 792 residues long: Lon protease (792 aa).

Residues 16–211 (DAVVVVPVSN…KVSAFLAQRL (196 aa)) enclose the Lon N-terminal domain. 361-368 (GPPGVGKT) contacts ATP. The Lon proteolytic domain occupies 597–778 (TSVPGVATGL…EDAIEAGLDP (182 aa)). Residues Ser-684 and Lys-727 contribute to the active site.

It belongs to the peptidase S16 family. As to quaternary structure, homohexamer. Organized in a ring with a central cavity.

It localises to the cytoplasm. The catalysed reaction is Hydrolysis of proteins in presence of ATP.. Its function is as follows. ATP-dependent serine protease that mediates the selective degradation of mutant and abnormal proteins as well as certain short-lived regulatory proteins. Required for cellular homeostasis and for survival from DNA damage and developmental changes induced by stress. Degrades polypeptides processively to yield small peptide fragments that are 5 to 10 amino acids long. Binds to DNA in a double-stranded, site-specific manner. The polypeptide is Lon protease (Phenylobacterium zucineum (strain HLK1)).